We begin with the raw amino-acid sequence, 87 residues long: MKQGIHPDYREVVFQDMSNGFKFITRSTIQTRETIELDGKTYPLAKIEVSSESHSFYTGQQKIMDTAGRVEKFKNKFGARASGKAAK.

This sequence belongs to the bacterial ribosomal protein bL31 family. Type B subfamily. Part of the 50S ribosomal subunit.

The protein is Large ribosomal subunit protein bL31B of Burkholderia thailandensis (strain ATCC 700388 / DSM 13276 / CCUG 48851 / CIP 106301 / E264).